The sequence spans 60 residues: Ribosome biogenesis protein Nop10 (60 aa).

Residues Ala-37–Leu-60 are disordered. A compositionally biased stretch (basic residues) spans Lys-49–Leu-60.

This sequence belongs to the NOP10 family.

In terms of biological role, involved in ribosome biogenesis; more specifically in 18S rRNA pseudouridylation and in cleavage of pre-rRNA. The protein is Ribosome biogenesis protein Nop10 of Halobacterium salinarum (strain ATCC 29341 / DSM 671 / R1).